Reading from the N-terminus, the 776-residue chain is Lysyl oxidase homolog 2 (776 aa).

Residues 1–25 (MELHFGSCLSGCLALLVLLPSLSLA) form the signal peptide. SRCR domains are found at residues 61–162 (VRLA…VVCS), 191–305 (IRPI…VSCV), 329–428 (VRLR…VRCN), and 438–546 (VRLN…VACS). Intrachain disulfides connect cysteine 87/cysteine 151, cysteine 100/cysteine 161, cysteine 131/cysteine 141, cysteine 221/cysteine 294, cysteine 234/cysteine 304, cysteine 268/cysteine 278, cysteine 354/cysteine 417, cysteine 367/cysteine 427, and cysteine 398/cysteine 408. Asparagine 267 carries an N-linked (GlcNAc...) asparagine glycan. Asparagine 291 carries an N-linked (GlcNAc...) asparagine glycan. The N-linked (GlcNAc...) asparagine glycan is linked to asparagine 458. 3 disulfide bridges follow: cysteine 467–cysteine 532, cysteine 480–cysteine 545, and cysteine 514–cysteine 524. Residues 550–753 (PDLVLNAEIV…WMYNCHVGGA (204 aa)) form a lysyl-oxidase like region. Aspartate 551 and leucine 552 together coordinate Ca(2+). Intrachain disulfides connect cysteine 575/cysteine 627, cysteine 581/cysteine 697, cysteine 659/cysteine 675, and cysteine 665/cysteine 687. The Cu cation site is built by histidine 628, histidine 630, and histidine 632. Asparagine 646 carries N-linked (GlcNAc...) asparagine glycosylation. The lysine tyrosylquinone (Lys-Tyr) cross-link spans 655–691 (KASFCLEDTECEGDIQKSYECANFGEQGITMGCWDMY). Tyrosine 691 carries the post-translational modification 2',4',5'-topaquinone. Residues glutamate 724, aspartate 726, asparagine 729, and asparagine 730 each coordinate Ca(2+). Cysteine 734 and cysteine 748 form a disulfide bridge.

The protein belongs to the lysyl oxidase family. Component of some chromatin repressor complex. Interacts with SNAI1. Interacts with TAF10. Interacts with HSPA5. Interacts with EFEMP2. Requires Cu cation as cofactor. Lysine tyrosylquinone residue is required as a cofactor. In terms of processing, the lysine tyrosylquinone cross-link (LTQ) is generated by condensation of the epsilon-amino group of a lysine with a topaquinone produced by oxidation of tyrosine. Post-translationally, N-glycosylated. N-glycosylation on Asn-458 and Asn-646 may be essential for proper folding and secretion; may be composed of a fucosylated carbohydrates attached to a trimannose N-linked glycan core. Ubiquitous. Highest expression in skin, lung and thymus. Present in chondrocytes: mainly expressed by chondrocytes in healing fractures and in epiphyseal growth plates (at protein level).

It localises to the secreted. Its subcellular location is the extracellular space. The protein resides in the extracellular matrix. The protein localises to the basement membrane. It is found in the nucleus. It localises to the chromosome. Its subcellular location is the endoplasmic reticulum. The catalysed reaction is L-lysyl-[protein] + O2 + H2O = (S)-2-amino-6-oxohexanoyl-[protein] + H2O2 + NH4(+). With respect to regulation, specifically inhibited by a mouse monoclonal antibody AB0023, inhibition occurs in a non-competitive manner. Its function is as follows. Mediates the post-translational oxidative deamination of lysine residues on target proteins leading to the formation of deaminated lysine (allysine). Acts as a transcription corepressor and specifically mediates deamination of trimethylated 'Lys-4' of histone H3 (H3K4me3), a specific tag for epigenetic transcriptional activation. Shows no activity against histone H3 when it is trimethylated on 'Lys-9' (H3K9me3) or 'Lys-27' (H3K27me3) or when 'Lys-4' is monomethylated (H3K4me1) or dimethylated (H3K4me2). Also mediates deamination of methylated TAF10, a member of the transcription factor IID (TFIID) complex, which induces release of TAF10 from promoters, leading to inhibition of TFIID-dependent transcription. LOXL2-mediated deamination of TAF10 results in transcriptional repression of genes required for embryonic stem cell pluripotency including POU5F1/OCT4, NANOG, KLF4 and SOX2. Involved in epithelial to mesenchymal transition (EMT) via interaction with SNAI1 and participates in repression of E-cadherin, probably by mediating deamination of histone H3. During EMT, involved with SNAI1 in negatively regulating pericentromeric heterochromatin transcription. SNAI1 recruits LOXL2 to pericentromeric regions to oxidize histone H3 and repress transcription which leads to release of heterochromatin component CBX5/HP1A, enabling chromatin reorganization and acquisition of mesenchymal traits. Interacts with the endoplasmic reticulum protein HSPA5 which activates the IRE1-XBP1 pathway of the unfolded protein response, leading to expression of several transcription factors involved in EMT and subsequent EMT induction. When secreted into the extracellular matrix, promotes cross-linking of extracellular matrix proteins by mediating oxidative deamination of peptidyl lysine residues in precursors to fibrous collagen and elastin. Acts as a regulator of sprouting angiogenesis, probably via collagen IV scaffolding. Acts as a regulator of chondrocyte differentiation, probably by regulating expression of factors that control chondrocyte differentiation. This Mus musculus (Mouse) protein is Lysyl oxidase homolog 2 (Loxl2).